We begin with the raw amino-acid sequence, 439 residues long: Ribosomal protein uS12 methylthiotransferase RimO (439 aa).

An MTTase N-terminal domain is found at 7 to 119 (KQLCLISLGC…IDILIAKKQN (113 aa)). The [4Fe-4S] cluster site is built by Cys-16, Cys-50, Cys-82, Cys-151, Cys-155, and Cys-158. In terms of domain architecture, Radical SAM core spans 137-368 (TGSSVHAYVK…ALKHQNHSFK (232 aa)).

The protein belongs to the methylthiotransferase family. RimO subfamily. It depends on [4Fe-4S] cluster as a cofactor.

It is found in the cytoplasm. The enzyme catalyses L-aspartate(89)-[ribosomal protein uS12]-hydrogen + (sulfur carrier)-SH + AH2 + 2 S-adenosyl-L-methionine = 3-methylsulfanyl-L-aspartate(89)-[ribosomal protein uS12]-hydrogen + (sulfur carrier)-H + 5'-deoxyadenosine + L-methionine + A + S-adenosyl-L-homocysteine + 2 H(+). In terms of biological role, catalyzes the methylthiolation of an aspartic acid residue of ribosomal protein uS12. The chain is Ribosomal protein uS12 methylthiotransferase RimO from Helicobacter pylori (strain J99 / ATCC 700824) (Campylobacter pylori J99).